The following is a 306-amino-acid chain: MGPTASGKTGLALHLAEHFPLEIVNADSVQVYRGMDIGSAKPTLQERQAIVHHLIDVTTPDDPFSAGRFRTAALEVIEDCHRRGVIPALVGGTGFYFRAVEQGIAEIPEVDAQIVAELNRRVCDEVGLACCYAQLQQVDPPWAARVEPGDRQRIVRGLSVYLASGQPLSYWQQLSCQQAPEGPALRICKLAIEWPREQLYARINQRFEQMLKEGFMEEVQGLLSRGYHGDLPAMRAVGYRALIGYLQGAYDLARAVELGQRDSRRYAKRQITWLKAEPGLQWLAPEGAKQAALDEVRAFLQFFKKK.

An ATP-binding site is contributed by 2–9; that stretch reads GPTASGKT. 4–9 lines the substrate pocket; it reads TASGKT. Interaction with substrate tRNA regions lie at residues 27-30 and 152-156; these read DSVQ and QRIVR.

This sequence belongs to the IPP transferase family. As to quaternary structure, monomer. Mg(2+) serves as cofactor.

The catalysed reaction is adenosine(37) in tRNA + dimethylallyl diphosphate = N(6)-dimethylallyladenosine(37) in tRNA + diphosphate. In terms of biological role, catalyzes the transfer of a dimethylallyl group onto the adenine at position 37 in tRNAs that read codons beginning with uridine, leading to the formation of N6-(dimethylallyl)adenosine (i(6)A). In Magnetococcus marinus (strain ATCC BAA-1437 / JCM 17883 / MC-1), this protein is tRNA dimethylallyltransferase.